Consider the following 257-residue polypeptide: 5'-nucleotidase SurE (257 aa).

A divalent metal cation contacts are provided by D8, D9, S40, and N95.

This sequence belongs to the SurE nucleotidase family. The cofactor is a divalent metal cation.

Its subcellular location is the cytoplasm. It catalyses the reaction a ribonucleoside 5'-phosphate + H2O = a ribonucleoside + phosphate. Functionally, nucleotidase that shows phosphatase activity on nucleoside 5'-monophosphates. This Desulfovibrio desulfuricans (strain ATCC 27774 / DSM 6949 / MB) protein is 5'-nucleotidase SurE.